The sequence spans 491 residues: Sterol 14-alpha demethylase (491 aa).

A helical transmembrane segment spans residues 20–40 (LWMLSTVALLSILVVSVVINV). Cysteine 430 provides a ligand contact to heme.

It belongs to the cytochrome P450 family. Requires heme as cofactor.

The protein resides in the endoplasmic reticulum membrane. It catalyses the reaction a 14alpha-methyl steroid + 3 reduced [NADPH--hemoprotein reductase] + 3 O2 = a Delta(14) steroid + formate + 3 oxidized [NADPH--hemoprotein reductase] + 4 H2O + 4 H(+). The enzyme catalyses a 14alpha-methyl steroid + reduced [NADPH--hemoprotein reductase] + O2 = a 14alpha-hydroxymethyl steroid + oxidized [NADPH--hemoprotein reductase] + H2O + H(+). The catalysed reaction is a 14alpha-hydroxymethyl steroid + reduced [NADPH--hemoprotein reductase] + O2 = a 14alpha-formyl steroid + oxidized [NADPH--hemoprotein reductase] + 2 H2O + H(+). It carries out the reaction a 14alpha-formyl steroid + reduced [NADPH--hemoprotein reductase] + O2 = a Delta(14) steroid + formate + oxidized [NADPH--hemoprotein reductase] + H2O + 2 H(+). It catalyses the reaction lanosterol + 3 reduced [NADPH--hemoprotein reductase] + 3 O2 = 4,4-dimethyl-5alpha-cholesta-8,14,24-trien-3beta-ol + formate + 3 oxidized [NADPH--hemoprotein reductase] + 4 H2O + 4 H(+). The enzyme catalyses lanosterol + reduced [NADPH--hemoprotein reductase] + O2 = 32-hydroxylanosterol + oxidized [NADPH--hemoprotein reductase] + H2O + H(+). The catalysed reaction is 32-hydroxylanosterol + reduced [NADPH--hemoprotein reductase] + O2 = 32-oxolanosterol + oxidized [NADPH--hemoprotein reductase] + 2 H2O + H(+). It carries out the reaction 32-oxolanosterol + reduced [NADPH--hemoprotein reductase] + O2 = 4,4-dimethyl-5alpha-cholesta-8,14,24-trien-3beta-ol + formate + oxidized [NADPH--hemoprotein reductase] + H2O + 2 H(+). It catalyses the reaction eburicol + 3 reduced [NADPH--hemoprotein reductase] + 3 O2 = 14-demethyleburicol + formate + 3 oxidized [NADPH--hemoprotein reductase] + 4 H2O + 4 H(+). The enzyme catalyses eburicol + reduced [NADPH--hemoprotein reductase] + O2 = 32-hydroxyeburicol + oxidized [NADPH--hemoprotein reductase] + H2O + H(+). The catalysed reaction is 32-hydroxyeburicol + reduced [NADPH--hemoprotein reductase] + O2 = 32-oxoeburicol + oxidized [NADPH--hemoprotein reductase] + 2 H2O + H(+). It carries out the reaction 32-oxoeburicol + reduced [NADPH--hemoprotein reductase] + O2 = 14-demethyleburicol + formate + oxidized [NADPH--hemoprotein reductase] + H2O + 2 H(+). The protein operates within steroid biosynthesis; sterol biosynthesis. Functionally, sterol 14alpha-demethylase, encoded by cyp51A, cyp51B and cyp51C, that plays a critical role in the third module of ergosterol biosynthesis pathway, being ergosterol the major sterol component in fungal membranes that participates in a variety of functions. The third module or late pathway involves the ergosterol synthesis itself through consecutive reactions that mainly occur in the endoplasmic reticulum (ER) membrane. In filamentous fungi, during the initial step of this module, lanosterol (lanosta-8,24-dien-3beta-ol) can be metabolized to eburicol. Sterol 14alpha-demethylase catalyzes the three-step oxidative removal of the 14alpha-methyl group (C-32) of both these sterols in the form of formate, and converts eburicol and lanosterol to 14-demethyleburicol (4,4,24-trimethylergosta-8,14,24(28)-trienol) and 4,4-dimethyl-5alpha-cholesta-8,14,24-trien-3beta-ol, respectively, which are further metabolized by other enzymes in the pathway to ergosterol. Can also use substrates not intrinsic to fungi, such as 24,25-dihydrolanosterol (DHL), producing 4,4'-dimethyl-8,14-cholestadien-3-beta-ol, but at lower rates than the endogenous substrates. Its function is as follows. As a target of azole drugs, plays a crucial role in azole susceptibility. This chain is Sterol 14-alpha demethylase, found in Aspergillus flavus (strain ATCC 200026 / FGSC A1120 / IAM 13836 / NRRL 3357 / JCM 12722 / SRRC 167).